A 207-amino-acid chain; its full sequence is Outer-membrane lipoprotein LolB (207 aa).

The signal sequence occupies residues 1-21 (MPLPDFRLIRLLPLAALVLTA). A lipid anchor (N-palmitoyl cysteine) is attached at cysteine 22. The S-diacylglycerol cysteine moiety is linked to residue cysteine 22.

The protein belongs to the LolB family. Monomer.

It is found in the cell outer membrane. In terms of biological role, plays a critical role in the incorporation of lipoproteins in the outer membrane after they are released by the LolA protein. The polypeptide is Outer-membrane lipoprotein LolB (Escherichia coli (strain K12 / MC4100 / BW2952)).